Reading from the N-terminus, the 251-residue chain is Putative ATP-binding protein Rv3427c in insertion sequence (251 aa).

An ATP-binding site is contributed by 108–115 (GPVGVGKT).

The protein belongs to the IS21/IS1162 putative ATP-binding protein family.

In Mycobacterium tuberculosis (strain ATCC 25618 / H37Rv), this protein is Putative ATP-binding protein Rv3427c in insertion sequence.